Reading from the N-terminus, the 314-residue chain is Transcription factor TCP20 (314 aa).

Disordered stretches follow at residues 1–91 (MDPK…RGRR) and 295–314 (NHEEHQQESGEKDDSQGSGR). Basic and acidic residues-rich tracts occupy residues 38 to 49 (DENRKPTTEIKD) and 77 to 89 (SNKDRHTKVEGRG). Positions 78 to 132 (NKDRHTKVEGRGRRIRMPALCAARIFQLTRELGHKSDGETIQWLLQQAEPSIIAA) constitute a TCP domain.

Interacts with PURA1. Interacts with SPL.

The protein localises to the nucleus. Transcription factor that binds to the site II motif (3'-TGGGCC/T-5') in the promoter of PCNA-2 and to 3'-GCCCG/A-5' elements in the promoters of cyclin CYCB1-1 and ribosomal protein genes. This chain is Transcription factor TCP20 (TCP20), found in Arabidopsis thaliana (Mouse-ear cress).